The following is a 1131-amino-acid chain: Inositol hexakisphosphate and diphosphoinositol-pentakisphosphate kinase 2 (1131 aa).

A disordered region spans residues 21-53 (DELLDQSKPENLDNLYEHTEDEEDEEDDEYDSP). The segment covering 25-38 (DQSKPENLDNLYEH) has biased composition (basic and acidic residues). The segment covering 39 to 52 (TEDEEDEEDDEYDS) has biased composition (acidic residues). 67-68 (KK) contributes to the substrate binding site. ATP-binding positions include Arg-148, Lys-201, His-208, Arg-227, 251 to 254 (EEFM), and 260 to 262 (DVK). 227–228 (RK) is a binding site for substrate. Positions 262 and 276 each coordinate substrate. ATP contacts are provided by residues Ser-278, Asp-323, and 335 to 337 (DVN). Position 340-343 (340-343 (SFVK)) interacts with substrate. Positions 385 to 456 (PTTSGTKMEL…VLDIARQLLV (72 aa)) are polyphosphoinositide-binding domain. The segment at 912 to 951 (KGCEEDKNLPSGFGYRPASQENESSKKHTHANDSDEDLGV) is disordered. Basic and acidic residues predominate over residues 934–951 (ESSKKHTHANDSDEDLGV).

Belongs to the histidine acid phosphatase family. VIP1 subfamily.

The protein resides in the cytoplasm. It localises to the cytosol. The catalysed reaction is 1D-myo-inositol hexakisphosphate + ATP = 1-diphospho-1D-myo-inositol 2,3,4,5,6-pentakisphosphate + ADP. It carries out the reaction 5-diphospho-1D-myo-inositol 1,2,3,4,6-pentakisphosphate + ATP + H(+) = 1,5-bis(diphospho)-1D-myo-inositol 2,3,4,6-tetrakisphosphate + ADP. Bifunctional inositol kinase that acts in concert with the IP6K kinases IP6K1, IP6K2 and IP6K3 to synthesize the diphosphate group-containing inositol pyrophosphates diphosphoinositol pentakisphosphate, PP-InsP5, and bis-diphosphoinositol tetrakisphosphate, (PP)2-InsP4. PP-InsP5 and (PP)2-InsP4, also respectively called InsP7 and InsP8, regulate a variety of cellular processes, including apoptosis, vesicle trafficking, cytoskeletal dynamics, exocytosis, insulin signaling and neutrophil activation. Phosphorylates inositol hexakisphosphate (InsP6) at position 1 to produce PP-InsP5 which is in turn phosphorylated by IP6Ks to produce (PP)2-InsP4. Alternatively, phosphorylates PP-InsP5 at position 1, produced by IP6Ks from InsP6, to produce (PP)2-InsP4. This chain is Inositol hexakisphosphate and diphosphoinositol-pentakisphosphate kinase 2, found in Xenopus laevis (African clawed frog).